A 496-amino-acid chain; its full sequence is Pseudooxynicotine dehydrogenase (496 aa).

Positions 1 to 42 form a signal peptide, tat-type signal; that stretch reads MTKDGDEGSKSGVSRRKFLGSAAVGVATAGIASQLLTLSAPA. Residues Ala-69, Glu-88, Arg-96, Trp-113, Val-285, Ser-461, and Ile-471 each contribute to the FAD site.

This sequence belongs to the flavin monoamine oxidase family. Homodimer. FAD serves as cofactor. In terms of processing, predicted to be exported by the Tat system. The position of the signal peptide cleavage has not been experimentally proven.

The protein resides in the periplasm. It carries out the reaction pseudooxynicotine + 2 Fe(III)-[cytochrome c] + H2O = 4-oxo-4-(pyridin-3-yl)butanal + methylamine + 2 Fe(II)-[cytochrome c] + 2 H(+). The protein operates within alkaloid degradation; nicotine degradation. With respect to regulation, strongly inhibited by Na(2)MoO(4) and FeCl(3). Activity is nearly twice as high in the presence of Na(2)WO(4). Functionally, involved in nicotine degradation. Catalyzes the deamination of pseudooxynicotine to 3-succinoylsemialdehyde-pyridine. Functions as a dehydrogenase that uses the c-type cytochrome protein CycN as the physiological electron acceptor. O(2) is a poor electron acceptor. Pnao is oxidized by CycN 230 times faster than O(2) at equivalent oxidant concentrations. The sequence is that of Pseudooxynicotine dehydrogenase from Pseudomonas putida (strain DSM 28022 / S16).